Consider the following 148-residue polypeptide: Large ribosomal subunit protein bL9 (148 aa).

It belongs to the bacterial ribosomal protein bL9 family.

In terms of biological role, binds to the 23S rRNA. This is Large ribosomal subunit protein bL9 from Geobacter metallireducens (strain ATCC 53774 / DSM 7210 / GS-15).